Here is a 267-residue protein sequence, read N- to C-terminus: Putative ankyrin repeat protein RF_1099 (267 aa).

4 ANK repeats span residues 46-75, 78-107, 136-165, and 170-199; these read DPIT…GVNQ, LGWV…SMSL, DGIT…NPNV, and TGMT…DPNI. Positions 238–265 form a coiled coil; the sequence is KQKIIKERNSIKTRNKEKEKEIKKLFNS.

This Rickettsia felis (strain ATCC VR-1525 / URRWXCal2) (Rickettsia azadi) protein is Putative ankyrin repeat protein RF_1099.